The following is a 217-amino-acid chain: 7-cyano-7-deazaguanine synthase (217 aa).

10 to 20 (FSGGQDSTTCL) is a binding site for ATP. Residues Cys185, Cys194, Cys197, and Cys200 each coordinate Zn(2+).

Belongs to the QueC family. Homodimer. Zn(2+) is required as a cofactor.

It catalyses the reaction 7-carboxy-7-deazaguanine + NH4(+) + ATP = 7-cyano-7-deazaguanine + ADP + phosphate + H2O + H(+). It functions in the pathway purine metabolism; 7-cyano-7-deazaguanine biosynthesis. Its function is as follows. Catalyzes the ATP-dependent conversion of 7-carboxy-7-deazaguanine (CDG) to 7-cyano-7-deazaguanine (preQ(0)). In Streptococcus thermophilus (strain CNRZ 1066), this protein is 7-cyano-7-deazaguanine synthase.